The following is a 241-amino-acid chain: 2-C-methyl-D-erythritol 4-phosphate cytidylyltransferase (241 aa).

This sequence belongs to the IspD/TarI cytidylyltransferase family. IspD subfamily.

It carries out the reaction 2-C-methyl-D-erythritol 4-phosphate + CTP + H(+) = 4-CDP-2-C-methyl-D-erythritol + diphosphate. The protein operates within isoprenoid biosynthesis; isopentenyl diphosphate biosynthesis via DXP pathway; isopentenyl diphosphate from 1-deoxy-D-xylulose 5-phosphate: step 2/6. Catalyzes the formation of 4-diphosphocytidyl-2-C-methyl-D-erythritol from CTP and 2-C-methyl-D-erythritol 4-phosphate (MEP). The sequence is that of 2-C-methyl-D-erythritol 4-phosphate cytidylyltransferase from Hahella chejuensis (strain KCTC 2396).